A 155-amino-acid polypeptide reads, in one-letter code: Microsomal glutathione S-transferase 1 (155 aa).

Residues 3–9 lie on the Lumenal side of the membrane; it reads DLTQVMD. The chain crosses the membrane as a helical span at residues 10 to 33; the sequence is DEVFMAFASYATIILSKMMLMSTA. The Cytoplasmic segment spans residues 34 to 62; that stretch reads TAFYRLTRKVFANPEDCVAFGKGENAKKY. Residue R38 coordinates glutathione. Residues K42, K55, and K60 each carry the N6-acetyllysine modification. A helical transmembrane segment spans residues 63–96; the sequence is LRTDDRVERVRRAHLNDLENIIPFLGIGLLYSLS. Residues R73, R74, H76, and E81 each contribute to the glutathione site. At 97–99 the chain is on the lumenal side; the sequence is GPD. A helical membrane pass occupies residues 100–123; that stretch reads PSTAILHFRLFVGARIYHTIAYLT. Position 121 (Y121) interacts with glutathione. The Cytoplasmic segment spans residues 124–128; the sequence is PLPQP. A helical membrane pass occupies residues 129 to 148; sequence NRALSFFVGYGVTLSMAYRL. The Lumenal segment spans residues 149 to 155; the sequence is LKSKLYL.

The protein belongs to the MAPEG family. In terms of assembly, homotrimer; The trimer binds only one molecule of glutathione. Highly expressed in liver.

The protein resides in the endoplasmic reticulum membrane. It is found in the mitochondrion outer membrane. It catalyses the reaction RX + glutathione = an S-substituted glutathione + a halide anion + H(+). Conjugation of reduced glutathione to a wide number of exogenous and endogenous hydrophobic electrophiles. This is Microsomal glutathione S-transferase 1 (MGST1) from Homo sapiens (Human).